The primary structure comprises 315 residues: tRNA-dihydrouridine(16) synthase (315 aa).

FMN contacts are provided by residues 7-9 (PME) and Gln-68. Catalysis depends on Cys-98, which acts as the Proton donor. Residues Lys-139, 200-202 (NGE), and 224-225 (GR) each bind FMN.

It belongs to the Dus family. DusC subfamily. FMN serves as cofactor.

The catalysed reaction is 5,6-dihydrouridine(16) in tRNA + NADP(+) = uridine(16) in tRNA + NADPH + H(+). It carries out the reaction 5,6-dihydrouridine(16) in tRNA + NAD(+) = uridine(16) in tRNA + NADH + H(+). Functionally, catalyzes the synthesis of 5,6-dihydrouridine (D), a modified base found in the D-loop of most tRNAs, via the reduction of the C5-C6 double bond in target uridines. Specifically modifies U16 in tRNAs. This chain is tRNA-dihydrouridine(16) synthase, found in Shigella flexneri.